Consider the following 24-residue polypeptide: Brevinin-1 (24 aa).

A disulfide bridge connects residues Cys-18 and Cys-24.

This sequence belongs to the frog skin active peptide (FSAP) family. Brevinin subfamily. As to expression, expressed by the skin glands.

It localises to the secreted. Functionally, shows antibacterial activity against representative Gram-negative and Gram-positive bacterial species, and a very high hemolytic activity. The polypeptide is Brevinin-1 (Pelophylax porosus brevipodus (Nagoya Daruma pond frog)).